A 364-amino-acid polypeptide reads, in one-letter code: Tyrosine--tRNA ligase (364 aa).

Y39 provides a ligand contact to L-tyrosine. 2 residues coordinate ATP: H49 and W52. Positions 165, 169, 172, and 187 each coordinate L-tyrosine. The 'KMSKS' region signature appears at 238 to 242 (KMSKS). An ATP-binding site is contributed by K241.

It belongs to the class-I aminoacyl-tRNA synthetase family. TyrS type 4 subfamily. As to quaternary structure, homodimer.

It is found in the cytoplasm. The enzyme catalyses tRNA(Tyr) + L-tyrosine + ATP = L-tyrosyl-tRNA(Tyr) + AMP + diphosphate + H(+). In terms of biological role, catalyzes the attachment of tyrosine to tRNA(Tyr) in a two-step reaction: tyrosine is first activated by ATP to form Tyr-AMP and then transferred to the acceptor end of tRNA(Tyr). This Aeropyrum pernix (strain ATCC 700893 / DSM 11879 / JCM 9820 / NBRC 100138 / K1) protein is Tyrosine--tRNA ligase.